Consider the following 102-residue polypeptide: COX assembly mitochondrial protein 2 homolog (102 aa).

The region spanning 11 to 55 is the CHCH domain; that stretch reads TKECNMLIEFLQRCHSEKPIGKMIGKCSYWDEAVWQCTKKERIWR. 2 consecutive short sequence motifs (cx9C motif) follow at residues 14 to 24 and 37 to 47; these read CNMLIEFLQRC and CSYWDEAVWQC. Intrachain disulfides connect C14-C47 and C24-C37.

This sequence belongs to the CMC family.

The protein resides in the mitochondrion. In terms of biological role, may be involved in cytochrome c oxidase biogenesis. This chain is COX assembly mitochondrial protein 2 homolog, found in Caenorhabditis elegans.